Here is a 199-residue protein sequence, read N- to C-terminus: MNAPRSLDELINALRCLPGVGPRSAQRMAYHLLQRDQEGARRLADSLDYALEHVRHCEKCNNFTEEVVCELCSSQRRDPALLCVVEMPADLLMMEQAHCYKGMYFVLMGRLSPLDGIGPREINLDRLLKRARDNMVKEVILATNFTVEGEATAHYIGEMLQNEGLKITRIARGLPVGGELEHVDSGTLAQAVLERREVK.

The C4-type zinc-finger motif lies at 57-72; sequence CEKCNNFTEEVVCELC. Positions 80-175 constitute a Toprim domain; it reads ALLCVVEMPA…KITRIARGLP (96 aa).

It belongs to the RecR family.

Its function is as follows. May play a role in DNA repair. It seems to be involved in an RecBC-independent recombinational process of DNA repair. It may act with RecF and RecO. This chain is Recombination protein RecR, found in Nitrosospira multiformis (strain ATCC 25196 / NCIMB 11849 / C 71).